The sequence spans 78 residues: MAQQRRGGRRRRKVDFIAANHIEYIDYKDTNLLDRFISERGKILPRRVTGTSAKNQRKLTIAIKRARIMGLLPFVSED.

The protein belongs to the bacterial ribosomal protein bS18 family. As to quaternary structure, part of the 30S ribosomal subunit. Forms a tight heterodimer with protein bS6.

Its function is as follows. Binds as a heterodimer with protein bS6 to the central domain of the 16S rRNA, where it helps stabilize the platform of the 30S subunit. The protein is Small ribosomal subunit protein bS18 of Lacticaseibacillus casei (strain BL23) (Lactobacillus casei).